The primary structure comprises 110 residues: Phosphoribosyl-ATP pyrophosphatase (110 aa).

It belongs to the PRA-PH family.

Its subcellular location is the cytoplasm. It catalyses the reaction 1-(5-phospho-beta-D-ribosyl)-ATP + H2O = 1-(5-phospho-beta-D-ribosyl)-5'-AMP + diphosphate + H(+). It participates in amino-acid biosynthesis; L-histidine biosynthesis; L-histidine from 5-phospho-alpha-D-ribose 1-diphosphate: step 2/9. This Pseudomonas fluorescens (strain ATCC BAA-477 / NRRL B-23932 / Pf-5) protein is Phosphoribosyl-ATP pyrophosphatase.